A 1032-amino-acid polypeptide reads, in one-letter code: Y' element ATP-dependent helicase YPR204W (1032 aa).

Residues 1–175 form the Helicase ATP-binding domain; sequence MADTPSVAVQ…LQRIGLTGLA (175 aa). 11 to 18 provides a ligand contact to ATP; sequence APPGYGKT. The DEAH box signature appears at 121-124; sequence DEFH. One can recognise a Helicase C-terminal domain in the interval 232–381; that stretch reads KLLLALFEIE…EFYGLESKKG (150 aa). Over residues 455–634 the composition is skewed to low complexity; sequence ANASTNATTN…ATTTESTNAS (180 aa). A disordered region spans residues 455–658; it reads ANASTNATTN…RFHPVTDINK (204 aa). Residues 635-658 are compositionally biased toward basic and acidic residues; sequence AKEDANKDGNAEDNRFHPVTDINK.

Belongs to the helicase family. Yeast subtelomeric Y' repeat subfamily.

In terms of biological role, catalyzes DNA unwinding and is involved in telomerase-independent telomere maintenance. The polypeptide is Y' element ATP-dependent helicase YPR204W (Saccharomyces cerevisiae (strain ATCC 204508 / S288c) (Baker's yeast)).